A 432-amino-acid polypeptide reads, in one-letter code: Adenosylhomocysteinase (432 aa).

Thr-57, Asp-131, and Glu-156 together coordinate substrate. 157–159 (TTT) contacts NAD(+). A Phosphoserine modification is found at Ser-183. Residues Lys-186 and Asp-190 each coordinate substrate. Residue Lys-186 is modified to N6-(2-hydroxyisobutyryl)lysine. The residue at position 193 (Tyr-193) is a Phosphotyrosine. NAD(+) is bound by residues 222 to 227 (GDVGKG), Glu-243, Asn-248, 299 to 301 (IGH), Asn-346, His-353, Lys-426, 426 to 430 (KPDHY), and Tyr-430.

Belongs to the adenosylhomocysteinase family. Homotetramer. Interaction with AHCYL1. The cofactor is NAD(+).

It localises to the cytoplasm. It is found in the melanosome. Its subcellular location is the nucleus. The protein resides in the endoplasmic reticulum. The catalysed reaction is S-adenosyl-L-homocysteine + H2O = L-homocysteine + adenosine. Its pathway is amino-acid biosynthesis; L-homocysteine biosynthesis; L-homocysteine from S-adenosyl-L-homocysteine: step 1/1. Functionally, catalyzes the hydrolysis of S-adenosyl-L-homocysteine to form adenosine and homocysteine. Binds copper ions. This is Adenosylhomocysteinase (Ahcy) from Rattus norvegicus (Rat).